We begin with the raw amino-acid sequence, 910 residues long: Constitutive coactivator of peroxisome proliferator-activated receptor gamma (910 aa).

3 disordered regions span residues 333 to 416 (SDAE…VPMC), 443 to 483 (SEPR…ESRQ), and 863 to 910 (SHHA…WRRY). Basic and acidic residues-rich tracts occupy residues 335–351 (AESREEVPMCSDAESRQ), 360–375 (ESRREVPVYTDSEPRQ), and 396–411 (ESRREVPMCSDPEPRQ). Positions 872-890 (QGSSYHRTGSGYSRSSQGQ) are enriched in polar residues. Arg885 carries the omega-N-methylarginine modification. Residues 901 to 910 (QYEHDQWRRY) are compositionally biased toward basic and acidic residues.

The protein belongs to the constitutive coactivator of PPAR-gamma family. Interacts with ESR1 and RXRA. Interacts with PPARG; in a ligand-independent manner. As to expression, widely expressed.

It is found in the nucleus. Functionally, functions as a transactivator of PPARG and ESR1. Functions in adipogenesis through PPARG activation. This chain is Constitutive coactivator of peroxisome proliferator-activated receptor gamma (FAM120B), found in Homo sapiens (Human).